The primary structure comprises 407 residues: Large ribosomal subunit protein uL3-like (407 aa).

Residues 1 to 31 (MSHRKFSAPRHGHLGFLPHKRSRRHRGKVKS) show a composition bias toward basic residues. Positions 1-37 (MSHRKFSAPRHGHLGFLPHKRSRRHRGKVKSWPRDDP) are disordered.

The protein belongs to the universal ribosomal protein uL3 family. In terms of assembly, component of the large ribosomal subunit (LSU). Part of a LSU subcomplex, the 5S RNP which is composed of the 5S RNA, RPL5 and RPL11. Interacts with NVL in an ATP-dependent manner. Interacts with RRP1B. Interacts with IPO5, IPO7 and KPNB1; these interactions may be involved in RPL5 nuclear import for the assembly of ribosomal subunits. Interacts with RRP1B. Expression is restricted to striated muscles.

Its function is as follows. Heart- and skeletal muscle-specific component of the ribosome, which regulates muscle function. Component of the large ribosomal subunit in striated muscle cells: replaces the RPL3 paralog in the ribosome in these cells. The ribosome is a large ribonucleoprotein complex responsible for the synthesis of proteins in the cell. Inhibits myotube growth and muscle function. The protein is Large ribosomal subunit protein uL3-like of Mus musculus (Mouse).